An 869-amino-acid polypeptide reads, in one-letter code: MQEKYHPQEIERQARQSWQETNIFNVTEIPDRPKYYCLSMFPYPSGKLHMGHVRNYTIGDVLSRYRRMQGYNVMQPMGWDAFGLPAENAAIQKGVPPAKWTYDNIAYMRSQLQSLGFAIDWQRELATCDPQYYRWNQWLFLRMLEKGIAYQKTQVVNWDPVDQTVLANEQVIDGCGWRTGAVVEKREIPGYYLAITRYADELLADLEKLPGWPERVKTMQANWIGKSFGVDITFPPDTASGMPQALKVFTTRADTLMGVTYVAVAAEHPVALHAAHNQPDLVAFIESCRQGATMEAELAVQEKKGMATGLYVLHPLTGERLPVWVANYVLMSYGEGAVMAVPAHDERDFDFARQHSLPIKPVIRPENGELSVPLVQAFTEYGVTFNSDRFSDLTSPEAIDAIAVELGQKALGEKRVRYRLRDWGISRQRYWGCPIPLIHCDSCGVVPVADDQLPVVLPEDLVPDGSGNPLAKTPSFYECTCPRCGRQARRETDTMDTFVDSSWYFIRYACPDQSAAMTDQRANYWLPVDQYIGGIEHAILHLLYSRFWSKVMRDLGLVSFDEPFANLLTQGMVLNEIFFRKTSSGRIQYFNPAEVDVQHDGEGKRVGAVLQADNQPVESGGIGTMSKSKNNGIDPQEIIEQYGADTARLFMMFASPPTQTLEWSDAGVEGAFRFLKRLWRQVYLHRQLDGEAAATTTLVPHQEYPADLRDLRCQLHQTIVKVTDDLERRHTFNTAIAAIMELMNELSDVQGTHPAARQLMQEALENIVLLLSPIVPHICHVLWRELRPGTELLDQPWPQADDQALIQDEVEIVVQINGKLRGQIRIAREADRAAVERTALQDEHIQKSIAYRPVKRVIVVPGKLINIVV.

A 'HIGH' region motif is present at residues 42–52 (PYPSGKLHMGH). Residues 624-628 (TMSKS) carry the 'KMSKS' region motif. K627 is an ATP binding site.

It belongs to the class-I aminoacyl-tRNA synthetase family.

Its subcellular location is the cytoplasm. It catalyses the reaction tRNA(Leu) + L-leucine + ATP = L-leucyl-tRNA(Leu) + AMP + diphosphate. The polypeptide is Leucine--tRNA ligase (Nitrosomonas europaea (strain ATCC 19718 / CIP 103999 / KCTC 2705 / NBRC 14298)).